We begin with the raw amino-acid sequence, 839 residues long: Probable beta-glucosidase I (839 aa).

N197 carries N-linked (GlcNAc...) asparagine glycosylation. Residue D225 is part of the active site. The region spanning D395–V555 is the PA14 domain. Residue N620 is glycosylated (N-linked (GlcNAc...) asparagine).

Belongs to the glycosyl hydrolase 3 family.

It is found in the secreted. It catalyses the reaction Hydrolysis of terminal, non-reducing beta-D-glucosyl residues with release of beta-D-glucose.. Its pathway is glycan metabolism; cellulose degradation. Its function is as follows. Beta-glucosidases are one of a number of cellulolytic enzymes involved in the degradation of cellulosic biomass. Catalyzes the last step releasing glucose from the inhibitory cellobiose. The protein is Probable beta-glucosidase I (bglI) of Aspergillus oryzae (strain ATCC 42149 / RIB 40) (Yellow koji mold).